We begin with the raw amino-acid sequence, 4662 residues long: Protein PF3D7_1417600 (4662 aa).

2 helical membrane-spanning segments follow: residues 136 to 156 (INYV…YLYI) and 161 to 181 (YIYY…FHII). The stretch at 466-489 (IKNIDSINKNHKRLIKISNYNITN) is one LRR 1 repeat. The disordered stretch occupies residues 583-710 (YRNDGDVNNK…KMKPDNTLNE (128 aa)). Residues 590 to 644 (NNKNGYNNNEHSNSSNERSNNNGDNNNNNHNNNNHNNNHHNNGSNNHNGNNNSNN) are compositionally biased toward low complexity. A compositionally biased stretch (basic and acidic residues) spans 650–666 (DDDKKGNDKKNEDKDDE). Positions 690–701 (KKRKEKSKNKNK) are enriched in basic residues. Positions 783–856 (YKPTEPVNIF…ISNDIKMFWF (74 aa)) constitute an HSA domain. Residues 942 to 967 (GLMNKMSHQNGKNNNHNDYNNKCEDN) are disordered. Residues 1150–1172 (NVHINHIQYDDNNLYYNDDLYNY) form an LRR 2 repeat. The segment covering 1505–1524 (NNNNNSNNNNSNSNNNSNSN) has biased composition (low complexity). Disordered stretches follow at residues 1505–1540 (NNNN…NNSS) and 1705–1761 (KINS…NEKD). Residues 1710–1761 (NNDKSDDKNDDKNDKKNDGKNDKNDEKDDNKTGEKGDNKIGEKDDNKINEKD) are compositionally biased toward basic and acidic residues. LRR repeat units follow at residues 2063 to 2086 (ITKV…MFNK) and 2129 to 2153 (DEEI…NVKD). The interval 2228–2261 (KNKSNKKKRAKKNIKLGEEENESECNNEGECNNE) is disordered. Residues 2230–2241 (KSNKKKRAKKNI) show a composition bias toward basic residues. Acidic residues predominate over residues 2246-2261 (EENESECNNEGECNNE). 4 LRR repeats span residues 2672 to 2695 (LDKL…KTID), 2773 to 2796 (NTVL…TVDI), 2864 to 2888 (INDD…VNNN), and 2904 to 2929 (ANNI…YNNS). The segment at 2956–2975 (MNNTKQRSHSSYHTSFPMQN) is disordered. LRR repeat units lie at residues 3377–3400 (QNNM…NITM), 3438–3461 (NNSM…YNNS), 3756–3781 (SQRL…NINN), 3935–3960 (QPNI…NINN), 3965–3985 (QPNI…SMNQ), and 3986–4010 (PNIN…NINN). Positions 4203 to 4272 (DMNQQERLQQ…ERLQQKWEQQ (70 aa)) form a coiled coil. 2 LRR repeats span residues 4296 to 4321 (YQEL…IFLK) and 4333 to 4357 (QKMH…SLQQ). The tract at residues 4384–4412 (QMNHQQINKHQMNQQQMNKQQMNQQQINQ) is disordered.

The protein resides in the membrane. The chain is Protein PF3D7_1417600 from Plasmodium falciparum (isolate 3D7).